Reading from the N-terminus, the 354-residue chain is Stimulator of interferon genes protein 3 (354 aa).

Helical transmembrane passes span 20 to 40 (VTFASVVIAIISGALLVFALW), 48 to 68 (INFVFFATALLMLSVIIGELI), 101 to 121 (YGSCILAVGTTSVLFVCYALL), and 132 to 152 (YGIFFILNCFVIPQLVFIVGI). 3',3'-cGAMP is bound by residues Asn178, Tyr183, Arg250, Ile251, Lys253, Glu272, Ser275, and Asn276.

Belongs to the STING family.

The protein resides in the membrane. Functionally, facilitator of innate immune signaling that acts as a sensor of second messenger signals produced by cyclic GMP-AMP synthase-like receptors (cGLRs) and promotes the production of type I interferon. Innate immune response is triggered in response to nucleotides from viruses and bacteria delivered to the cytoplasm. Acts by binding cyclic dinucleotides: recognizes and binds cyclic 3'-3' linked cGAMP (3'-3'-cGAMP), cyclic di-AMP (3',3'-c-di-AMP) and cyclic di-GMP (3',3'-c-di-GMP) second messengers produced by cGLRs in response to nucleotides in the cytosol, such as double-stranded RNA (dsRNA). Upon binding to 3'-3'-cGAMP, 3',3'-c-di-AMP or 3',3'-c-di-GMP, oligomerizes and promotes the recruitment and subsequent activation of the transcription factor IRF3 to induce expression of type I interferon. The sequence is that of Stimulator of interferon genes protein 3 from Stylophora pistillata (Smooth cauliflower coral).